We begin with the raw amino-acid sequence, 63 residues long: Large ribosomal subunit protein uL29 (63 aa).

It belongs to the universal ribosomal protein uL29 family.

In Glaesserella parasuis serovar 5 (strain SH0165) (Haemophilus parasuis), this protein is Large ribosomal subunit protein uL29.